Here is a 187-residue protein sequence, read N- to C-terminus: Ribonuclease HII (187 aa).

Positions 1 to 187 (MICGTDEAGR…NPVKRLLANL (187 aa)) constitute an RNase H type-2 domain. A divalent metal cation contacts are provided by aspartate 6, glutamate 7, and aspartate 98.

Belongs to the RNase HII family. Requires Mn(2+) as cofactor. Mg(2+) serves as cofactor.

Its subcellular location is the cytoplasm. It carries out the reaction Endonucleolytic cleavage to 5'-phosphomonoester.. Endonuclease that specifically degrades the RNA of RNA-DNA hybrids. The polypeptide is Ribonuclease HII (Idiomarina loihiensis (strain ATCC BAA-735 / DSM 15497 / L2-TR)).